The primary structure comprises 383 residues: Succinyl-diaminopimelate desuccinylase (383 aa).

Residue His-72 participates in Zn(2+) binding. Residue Asp-74 is part of the active site. Asp-105 contacts Zn(2+). Residue Glu-137 is the Proton acceptor of the active site. Zn(2+) contacts are provided by Glu-138, Glu-167, and His-352.

Belongs to the peptidase M20A family. DapE subfamily. As to quaternary structure, homodimer. Zn(2+) is required as a cofactor. Requires Co(2+) as cofactor.

The catalysed reaction is N-succinyl-(2S,6S)-2,6-diaminopimelate + H2O = (2S,6S)-2,6-diaminopimelate + succinate. Its pathway is amino-acid biosynthesis; L-lysine biosynthesis via DAP pathway; LL-2,6-diaminopimelate from (S)-tetrahydrodipicolinate (succinylase route): step 3/3. In terms of biological role, catalyzes the hydrolysis of N-succinyl-L,L-diaminopimelic acid (SDAP), forming succinate and LL-2,6-diaminopimelate (DAP), an intermediate involved in the bacterial biosynthesis of lysine and meso-diaminopimelic acid, an essential component of bacterial cell walls. The sequence is that of Succinyl-diaminopimelate desuccinylase from Ehrlichia ruminantium (strain Welgevonden).